We begin with the raw amino-acid sequence, 37 residues long: Chitinase-like protein (37 aa).

The segment at 1-20 (VLLSVGGDADTESPEKKNLG) is disordered. The 37-residue stretch at 1–37 (VLLSVGGDADTESPEKKNLGGVSIVDLSMDDFRGLLT) folds into the GH18 domain.

It belongs to the glycosyl hydrolase 18 family. IDGF subfamily. In terms of processing, glycosylated.

It localises to the secreted. Functionally, cooperates with insulin-like peptides to stimulate the proliferation, polarization and motility of imaginal disk cells. May act by stabilizing the binding of insulin-like peptides to its receptor through a simultaneous interaction with both molecules to form a multiprotein signaling complex. This chain is Chitinase-like protein, found in Heliothis virescens (Tobacco budworm moth).